The sequence spans 435 residues: DEAD-box ATP-dependent RNA helicase CshB (435 aa).

The Q motif signature appears at 5–33 (SRFDQFGFQPFIGLAIDKLGFYEPTEVQQ). The Helicase ATP-binding domain occupies 36-208 (IPGILKGESI…SKYMENPRYE (173 aa)). Residue 49–56 (SQTGTGKT) coordinates ATP. Positions 156–159 (DEAD) match the DEAD box motif. One can recognise a Helicase C-terminal domain in the interval 235–378 (LLKNVLVGSQ…HVDWKNKEFV (144 aa)). Residues 383 to 435 (RNRRAKREAKRETADPREIGMRKKAKQKGKPNYKKKINYKMNEIKRRERRKKR) are disordered. A compositionally biased stretch (basic and acidic residues) spans 391-403 (AKRETADPREIGM). Residues 404 to 420 (RKKAKQKGKPNYKKKIN) are compositionally biased toward basic residues.

It belongs to the DEAD box helicase family. CshB subfamily.

Its subcellular location is the cytoplasm. The enzyme catalyses ATP + H2O = ADP + phosphate + H(+). DEAD-box RNA helicase involved in cold tolerance, motility, and tolerance to heat, alkali and oxidative stress. The protein is DEAD-box ATP-dependent RNA helicase CshB of Listeria monocytogenes serovar 1/2a (strain ATCC BAA-679 / EGD-e).